Reading from the N-terminus, the 196-residue chain is UMP-CMP kinase (196 aa).

Residue 13 to 18 (GAGKGT) coordinates ATP. A Phosphoserine modification is found at serine 33. The segment at 33 to 63 (SAGELLRDERKNPDSQYGELIEKYIKEGKIV) is NMP. Position 39 (arginine 39) interacts with a ribonucleoside 5'-phosphate. Lysine 43 and lysine 55 each carry N6-acetyllysine. An a ribonucleoside 5'-phosphate-binding site is contributed by 61–63 (KIV). A Glycyl lysine isopeptide (Lys-Gly) (interchain with G-Cter in SUMO2) cross-link involves residue lysine 73. Residue 93-96 (GFPR) participates in a ribonucleoside 5'-phosphate binding. Asparagine 100 contacts CMP. Lysine 106 carries the post-translational modification N6-succinyllysine. Residues 133 to 143 (ERGKSSGRSDD) form an LID region. ATP is bound at residue arginine 134. Positions 140 and 151 each coordinate a ribonucleoside 5'-phosphate. Lysine 179 provides a ligand contact to ATP. Position 180 is a phosphoserine (serine 180).

The protein belongs to the adenylate kinase family. UMP-CMP kinase subfamily. As to quaternary structure, monomer. The cofactor is Mg(2+). In terms of tissue distribution, ubiquitously expressed.

It localises to the nucleus. The protein resides in the cytoplasm. It catalyses the reaction CMP + ATP = CDP + ADP. The catalysed reaction is dCMP + ATP = dCDP + ADP. The enzyme catalyses UMP + ATP = UDP + ADP. It carries out the reaction a 2'-deoxyribonucleoside 5'-diphosphate + ATP = a 2'-deoxyribonucleoside 5'-triphosphate + ADP. It catalyses the reaction a ribonucleoside 5'-diphosphate + ATP = a ribonucleoside 5'-triphosphate + ADP. Its function is as follows. Catalyzes the phosphorylation of pyrimidine nucleoside monophosphates at the expense of ATP. Plays an important role in de novo pyrimidine nucleotide biosynthesis. Has preference for UMP and CMP as phosphate acceptors. Also displays broad nucleoside diphosphate kinase activity. The sequence is that of UMP-CMP kinase from Homo sapiens (Human).